We begin with the raw amino-acid sequence, 451 residues long: 1,3-beta-glucanosyltransferase PGA4 (451 aa).

The N-terminal stretch at 1-18 (MLFRSLVTYLSLVSSVLS) is a signal peptide. (1,3-beta-D-glucosyl)n is bound at residue Tyr81. N-linked (GlcNAc...) asparagine glycosylation is present at Asn88. (1,3-beta-D-glucosyl)n is bound by residues 108 to 116 (NTPHSSITR), Asn151, Glu152, and Arg198. Glu152 acts as the Proton donor in catalysis. N-linked (GlcNAc...) asparagine glycosylation is present at Asn245. The Nucleophile role is filled by Glu254. Residue Tyr286 participates in (1,3-beta-D-glucosyl)n binding. Residues 316 to 336 (SQFEKTKNPSGDGGYLKSTGG) form a disordered region. N-linked (GlcNAc...) asparagine glycosylation is found at Asn347, Asn394, and Asn422. The disordered stretch occupies residues 395-427 (YTSSITASSRASPSQTSQVSSSSATSANSTSSK). Residues 396–426 (TSSITASSRASPSQTSQVSSSSATSANSTSS) are compositionally biased toward low complexity. Asp430 is lipidated: GPI-anchor amidated aspartate. Positions 431–451 (AAVEGAGFLSVIALAAGIALL) are cleaved as a propeptide — removed in mature form.

This sequence belongs to the glycosyl hydrolase 72 family. Post-translationally, the GPI-anchor is attached to the protein in the endoplasmic reticulum and serves to target the protein to the cell surface. There, the glucosamine-inositol phospholipid moiety is cleaved off and the GPI-modified mannoprotein is covalently attached via its lipidless GPI glycan remnant to the 1,6-beta-glucan of the outer cell wall layer.

The protein resides in the secreted. It localises to the cell wall. It is found in the membrane. In terms of biological role, splits internally a 1,3-beta-glucan molecule and transfers the newly generated reducing end (the donor) to the non-reducing end of another 1,3-beta-glucan molecule (the acceptor) forming a 1,3-beta linkage, resulting in the elongation of 1,3-beta-glucan chains in the cell wall. Involved in cell wall biosynthesis and morphogenesis. Plays a key role in virulence. The protein is 1,3-beta-glucanosyltransferase PGA4 (PGA4) of Candida albicans (strain SC5314 / ATCC MYA-2876) (Yeast).